The sequence spans 374 residues: Chaperone protein DnaJ (374 aa).

The region spanning 5 to 70 (DYYEVLGVNL…RKRASYDQFG (66 aa)) is the J domain. The CR-type zinc finger occupies 133 to 210 (GLSRTIKVPT…CHGQGRQQQT (78 aa)). Zn(2+) is bound by residues C146, C149, C162, C165, C184, C187, C198, and C201. CXXCXGXG motif repeat units lie at residues 146 to 153 (CKTCNGSG), 162 to 169 (CPRCNGSG), 184 to 191 (CSVCRGRG), and 198 to 205 (CTDCHGQG).

The protein belongs to the DnaJ family. As to quaternary structure, homodimer. It depends on Zn(2+) as a cofactor.

It is found in the cytoplasm. Functionally, participates actively in the response to hyperosmotic and heat shock by preventing the aggregation of stress-denatured proteins and by disaggregating proteins, also in an autonomous, DnaK-independent fashion. Unfolded proteins bind initially to DnaJ; upon interaction with the DnaJ-bound protein, DnaK hydrolyzes its bound ATP, resulting in the formation of a stable complex. GrpE releases ADP from DnaK; ATP binding to DnaK triggers the release of the substrate protein, thus completing the reaction cycle. Several rounds of ATP-dependent interactions between DnaJ, DnaK and GrpE are required for fully efficient folding. Also involved, together with DnaK and GrpE, in the DNA replication of plasmids through activation of initiation proteins. The polypeptide is Chaperone protein DnaJ (Coxiella burnetii (strain RSA 331 / Henzerling II)).